Here is a 594-residue protein sequence, read N- to C-terminus: Glutamate decarboxylase 1 (594 aa).

Over residues 1–13 (MASSTPSSSATSS) the composition is skewed to low complexity. Residues 1–23 (MASSTPSSSATSSNAGADPNTTN) are disordered. Phosphoserine is present on Ser78. 190–192 (QLS) serves as a coordination point for 4-aminobutanoate. At Lys405 the chain carries N6-(pyridoxal phosphate)lysine. Arg567 contributes to the 4-aminobutanoate binding site.

This sequence belongs to the group II decarboxylase family. As to quaternary structure, homodimer. Pyridoxal 5'-phosphate serves as cofactor.

It catalyses the reaction L-glutamate + H(+) = 4-aminobutanoate + CO2. Its function is as follows. Catalyzes the synthesis of the inhibitory neurotransmitter gamma-aminobutyric acid (GABA) with pyridoxal 5'-phosphate as cofactor. The protein is Glutamate decarboxylase 1 (GAD1) of Felis catus (Cat).